The sequence spans 496 residues: Thiamine transporter 2 (496 aa).

The Cytoplasmic segment spans residues 1-7; that stretch reads MDCYRTS. Residues 8-28 form a helical membrane-spanning segment; that stretch reads LSSSWIYPTVILCLFGFFSMM. At 29-53 the chain is on the extracellular side; that stretch reads RPSEPFLIPYLSGPDKNLTSAEITN. The N-linked (GlcNAc...) asparagine glycan is linked to asparagine 45. Residues 54–74 form a helical membrane-spanning segment; the sequence is EIFPVWTYSYLVLLLPVFVLT. At 75–81 the chain is on the cytoplasmic side; the sequence is DYVRYKP. Residues 82–102 traverse the membrane as a helical segment; sequence VIILQGISFIITWLLLLFGQG. Over 103 to 110 the chain is Extracellular; it reads VKTMQVVE. Residues 111 to 131 form a helical membrane-spanning segment; the sequence is FFYGMVTAAEVAYYAYIYSVV. Residues 132–144 are Cytoplasmic-facing; the sequence is SPEHYQRVSGYCR. The chain crosses the membrane as a helical span at residues 145-165; it reads SVTLAAYTAGSVLAQLLVSLA. The N-linked (GlcNAc...) asparagine glycan is linked to asparagine 166. At 166 to 169 the chain is on the extracellular side; it reads NMSY. The chain crosses the membrane as a helical span at residues 170-190; sequence FYLNVISLASVSVAFLFSLFL. Residues 191–282 lie on the Cytoplasmic side of the membrane; it reads PMPKKSMFFH…YSSKRLFYWS (92 aa). Residues 283–303 traverse the membrane as a helical segment; that stretch reads LWWAFATAGFNQVLNYVQILW. Over 304 to 316 the chain is Extracellular; it reads DYKAPSQDSSIYN. The helical transmembrane segment at 317 to 337 threads the bilayer; that stretch reads GAVEAIATFGGAVAAFAVGYV. The Cytoplasmic segment spans residues 338–342; that stretch reads KVNWD. A helical transmembrane segment spans residues 343-363; that stretch reads LLGELALVVFSVVNAGSLFLM. Topologically, residues 364–375 are extracellular; sequence HYTANIWACYAG. The chain crosses the membrane as a helical span at residues 376-396; the sequence is YLIFKSSYMLLITIAVFQIAV. At 397–405 the chain is on the cytoplasmic side; the sequence is NLNVERYAL. The helical transmembrane segment at 406 to 426 threads the bilayer; sequence VFGINTFIALVIQTIMTVIVV. The Extracellular segment spans residues 427–434; it reads DQRGLNLP. The helical transmembrane segment at 435-455 threads the bilayer; the sequence is VSIQFLVYGSYFAVIAGIFLM. The Cytoplasmic segment spans residues 456–496; it reads RSMYITYSTKSQKDVQSPAPSENPDVSHPEEESNIIMSTKL. Residues 468-496 are disordered; that stretch reads KDVQSPAPSENPDVSHPEEESNIIMSTKL.

Belongs to the reduced folate carrier (RFC) transporter (TC 2.A.48) family. Widely expressed but most abundant in placenta, kidney and liver.

The protein localises to the membrane. It catalyses the reaction thiamine(out) + H(+)(in) = thiamine(in) + H(+)(out). The enzyme catalyses pyridoxine(out) + n H(+)(out) = pyridoxine(in) + n H(+)(in). Pyridoxine transport is inhibited by carbonyl cyanide p-trifluoromethoxyphenylhydrazone (FCCP) and carbonyl cyanide m-chlorophenylhydrazone (CCCP). Mediates high affinity thiamine uptake, probably via a proton anti-port mechanism. Has no folate transport activity. Mediates H(+)-dependent pyridoxine transport. This Homo sapiens (Human) protein is Thiamine transporter 2 (SLC19A3).